Consider the following 190-residue polypeptide: Protein GrpE (190 aa).

The span at 1 to 31 (MTEEQKKYEDAENLESKSENPEEASAEKSEN) shows a compositional bias: basic and acidic residues. A disordered region spans residues 1-39 (MTEEQKKYEDAENLESKSENPEEASAEKSENGVEDLQAE).

The protein belongs to the GrpE family. In terms of assembly, homodimer.

The protein localises to the cytoplasm. Participates actively in the response to hyperosmotic and heat shock by preventing the aggregation of stress-denatured proteins, in association with DnaK and GrpE. It is the nucleotide exchange factor for DnaK and may function as a thermosensor. Unfolded proteins bind initially to DnaJ; upon interaction with the DnaJ-bound protein, DnaK hydrolyzes its bound ATP, resulting in the formation of a stable complex. GrpE releases ADP from DnaK; ATP binding to DnaK triggers the release of the substrate protein, thus completing the reaction cycle. Several rounds of ATP-dependent interactions between DnaJ, DnaK and GrpE are required for fully efficient folding. This chain is Protein GrpE, found in Zymomonas mobilis subsp. mobilis (strain ATCC 31821 / ZM4 / CP4).